A 259-amino-acid chain; its full sequence is MTDLTKSSLRALQLMDLTTLNDDDTNEKVIALCHQAKTPVGNTAAVCIYPRFIPIARKTLNEQGTPDIRIATVTNFPHGNDDIDIALAETRAAIAYGADEVDVVFPYRALMAGNEQVGFDLVKACKDACAAANVLLKVIIETGELKEEALIRKASEISIKAGADFIKTSTGKVPVNATPESARIMLEVIRDMGVAKTVGFKPAGGVRTAEDAAKYLAVADELLGADWADARHYRFGASSLLASLLQALGHGDGKSASSY.

Catalysis depends on D102, which acts as the Proton donor/acceptor. The active-site Schiff-base intermediate with acetaldehyde is the K167. Catalysis depends on K201, which acts as the Proton donor/acceptor.

The protein belongs to the DeoC/FbaB aldolase family. DeoC type 2 subfamily.

It localises to the cytoplasm. It carries out the reaction 2-deoxy-D-ribose 5-phosphate = D-glyceraldehyde 3-phosphate + acetaldehyde. The protein operates within carbohydrate degradation; 2-deoxy-D-ribose 1-phosphate degradation; D-glyceraldehyde 3-phosphate and acetaldehyde from 2-deoxy-alpha-D-ribose 1-phosphate: step 2/2. Functionally, catalyzes a reversible aldol reaction between acetaldehyde and D-glyceraldehyde 3-phosphate to generate 2-deoxy-D-ribose 5-phosphate. This is Deoxyribose-phosphate aldolase from Cronobacter sakazakii (strain ATCC BAA-894) (Enterobacter sakazakii).